A 1167-amino-acid chain; its full sequence is DNA-directed RNA polymerase subunit beta (1167 aa).

Belongs to the RNA polymerase beta chain family. The RNAP catalytic core consists of 2 alpha, 1 beta, 1 beta' and 1 omega subunit. When a sigma factor is associated with the core the holoenzyme is formed, which can initiate transcription.

The catalysed reaction is RNA(n) + a ribonucleoside 5'-triphosphate = RNA(n+1) + diphosphate. Its function is as follows. DNA-dependent RNA polymerase catalyzes the transcription of DNA into RNA using the four ribonucleoside triphosphates as substrates. This is DNA-directed RNA polymerase subunit beta from Mycolicibacterium vanbaalenii (strain DSM 7251 / JCM 13017 / BCRC 16820 / KCTC 9966 / NRRL B-24157 / PYR-1) (Mycobacterium vanbaalenii).